We begin with the raw amino-acid sequence, 254 residues long: U3 small nucleolar RNA-associated protein NOL7 (254 aa).

Positions Met1 to Leu90 are disordered. Acidic residues-rich tracts occupy residues Met18–Ala31 and Pro48–Glu61. Residues Glu71–Leu90 are compositionally biased toward basic and acidic residues. A Glycyl lysine isopeptide (Lys-Gly) (interchain with G-Cter in SUMO2) cross-link involves residue Lys127. Residue Ser129 is modified to Phosphoserine. A Glycyl lysine isopeptide (Lys-Gly) (interchain with G-Cter in SUMO2) cross-link involves residue Lys157. A disordered region spans residues Asn235–Lys254.

It belongs to the UTP16 family. As to quaternary structure, part of the small subunit (SSU) processome, composed of more than 70 proteins and the RNA chaperone small nucleolar RNA (snoRNA) U3.

It is found in the nucleus. Its subcellular location is the nucleolus. Its function is as follows. Functions as part of the small subunit (SSU) processome, first precursor of the small eukaryotic ribosomal subunit that coordinates the first two steps of ribosome biogenesis in transcription of the primary transcript pre-RNA and pre-18S processing. During the assembly of the SSU processome in the nucleolus, many ribosome biogenesis factors, an RNA chaperone and ribosomal proteins associate with the nascent pre-rRNA and work in concert to generate RNA folding, modifications, rearrangements and cleavage as well as targeted degradation of pre-ribosomal RNA by the RNA exosome. This subunit is required for processing of the 5'-external transcribed spacer sequence (5'ETS) of the primary transcript pre-rRNA to yield the 18S rRNA. Also plays a role in maintaining early pre-rRNA levels, either by assisting in its transcription or stability. The protein is U3 small nucleolar RNA-associated protein NOL7 (Nol7) of Mus musculus (Mouse).